The following is a 162-amino-acid chain: NADH-quinone oxidoreductase subunit I (162 aa).

2 consecutive 4Fe-4S ferredoxin-type domains span residues 53–83 (LRRY…IEAE) and 93–122 (TRYD…EGPN). [4Fe-4S] cluster is bound by residues cysteine 63, cysteine 66, cysteine 69, cysteine 73, cysteine 102, cysteine 105, cysteine 108, and cysteine 112.

This sequence belongs to the complex I 23 kDa subunit family. In terms of assembly, NDH-1 is composed of 14 different subunits. Subunits NuoA, H, J, K, L, M, N constitute the membrane sector of the complex. It depends on [4Fe-4S] cluster as a cofactor.

Its subcellular location is the cell inner membrane. The catalysed reaction is a quinone + NADH + 5 H(+)(in) = a quinol + NAD(+) + 4 H(+)(out). NDH-1 shuttles electrons from NADH, via FMN and iron-sulfur (Fe-S) centers, to quinones in the respiratory chain. The immediate electron acceptor for the enzyme in this species is believed to be ubiquinone. Couples the redox reaction to proton translocation (for every two electrons transferred, four hydrogen ions are translocated across the cytoplasmic membrane), and thus conserves the redox energy in a proton gradient. This is NADH-quinone oxidoreductase subunit I from Maricaulis maris (strain MCS10) (Caulobacter maris).